A 175-amino-acid chain; its full sequence is Shikimate kinase (175 aa).

Position 14 to 19 (Gly-14 to Thr-19) interacts with ATP. A Mg(2+)-binding site is contributed by Ser-18. The substrate site is built by Asp-36, Arg-60, and Gly-82. Arg-120 lines the ATP pocket. Arg-140 provides a ligand contact to substrate. ATP is bound at residue Gln-157.

The protein belongs to the shikimate kinase family. Monomer. Mg(2+) serves as cofactor.

The protein resides in the cytoplasm. It carries out the reaction shikimate + ATP = 3-phosphoshikimate + ADP + H(+). The protein operates within metabolic intermediate biosynthesis; chorismate biosynthesis; chorismate from D-erythrose 4-phosphate and phosphoenolpyruvate: step 5/7. Functionally, catalyzes the specific phosphorylation of the 3-hydroxyl group of shikimic acid using ATP as a cosubstrate. This Pasteurella multocida (strain Pm70) protein is Shikimate kinase.